The following is a 315-amino-acid chain: Indoleacetate decarboxylase activating enzyme (315 aa).

Residues 21-311 (HDGPGIRTNV…ADIIEAHGVK (291 aa)) enclose the Radical SAM core domain. Cys-35, Cys-39, Cys-42, Cys-61, Cys-64, Cys-67, Cys-71, Cys-98, Cys-101, Cys-106, and Cys-110 together coordinate [4Fe-4S] cluster. 4Fe-4S ferredoxin-type domains are found at residues 52 to 81 (PQLLYTKMKCIGCMCCARACPYGAVSAITD) and 89 to 120 (GYVHHDRSKCDKCTTHECLSACFQEALSIAGE). S-adenosyl-L-methionine-binding positions include Gly-149, 198-200 (DCK), and His-271.

It belongs to the organic radical-activating enzymes family. Requires [4Fe-4S] cluster as cofactor.

The catalysed reaction is glycyl-[protein] + reduced [flavodoxin] + S-adenosyl-L-methionine = glycin-2-yl radical-[protein] + semiquinone [flavodoxin] + 5'-deoxyadenosine + L-methionine + H(+). Functionally, catalyzes activation of the indoleacetate decarboxylase OsIAD under anaerobic conditions by generation of an organic free radical on a glycine residue, via a homolytic cleavage of S-adenosyl-L-methionine (SAM). The chain is Indoleacetate decarboxylase activating enzyme from Tractidigestivibacter scatoligenes (Olsenella scatoligenes).